We begin with the raw amino-acid sequence, 378 residues long: Interleukin-3 receptor subunit alpha (378 aa).

Positions 1 to 18 (MVLLWLTLLLIALPCLLQ) are cleaved as a signal peptide. Topologically, residues 19 to 305 (TKEDPNPPIT…EEGANTRAWR (287 aa)) are extracellular. Residues asparagine 46, asparagine 64, asparagine 80, and asparagine 109 are each glycosylated (N-linked (GlcNAc...) asparagine). 4 disulfides stabilise this stretch: cysteine 52-cysteine 68, cysteine 76-cysteine 195, cysteine 112-cysteine 122, and cysteine 151-cysteine 165. Asparagine 212 and asparagine 218 each carry an N-linked (GlcNAc...) asparagine glycan. Cysteine 217 and cysteine 293 are joined by a disulfide. A WSXWS motif motif is present at residues 282–286 (LSAWS). A helical transmembrane segment spans residues 306–325 (TSLLIALGTLLALVCVFVIC). Residues 326–378 (RRYLVMQRLFPRIPHMKDPIGDSFQNDKLVVWEAGKAGLEECLVTEVQVVQKT) lie on the Cytoplasmic side of the membrane. Residues 334-342 (LFPRIPHMK) carry the Box 1 motif motif.

This sequence belongs to the type I cytokine receptor family. Type 5 subfamily. Interacts with IL3. Heterodimer of an alpha and a beta subunit. The beta subunit is common to the IL3, IL5 and GM-CSF receptors. Ubiquitinated by RNFT2 in response to IL3. Ubiquitination leads ligand-induced degradation by the proteasome. Ubiquitinated by RNF128 via 'Lys-27'-linked polyubiquitination, facilitating its degradation through the lysosomal pathway.

It localises to the cell membrane. Cell surface receptor for IL3 expressed on hematopoietic progenitor cells, monocytes and B-lymphocytes that controls the production and differentiation of hematopoietic progenitor cells into lineage-restricted cells. Ligand stimulation rapidly induces hetrodimerization with IL3RB, phosphorylation and enzyme activity of effector proteins such as JAK2 and PI3K that play a role in signaling cell proliferation and differentiation. Activation of JAK2 leads to STAT5-mediated transcriptional program. The chain is Interleukin-3 receptor subunit alpha from Homo sapiens (Human).